The primary structure comprises 456 residues: MLPSQSPAIFTVSRLNQTVRLLLEHEMGQVWISGEISNFTQPASGHWYFTLKDDTAQVRCAMFRNSNRRVTFRPQHGQQVLVRANITLYEPRGDYQIIVESMQPAGEGLLQQKYEQLKAKLQAECLFDQQYKKPLPSPAHCVGVITSKTGAALHDILHVLKRRDPSLPVIIYPTSVQGDDAPGQIVRAIELANQRNECDVLIVGRGGGSLEDLWSFNDERVARAIFASRIPVVSAVGHETDVTIADFVADLRAPTPSAAAEVVSRNQQELLRQVQSTRQRLEMAMDYYLANRTRRFTQIHHRLQQQHPQLRLARQQTMLERLQKRMSFALENQLKRTGQQQQRLTQRLNQQNPQPKIHRAQTRIQQLEYRLAETLRVQLSATRERFGNAVTHLEAVSPLSTLARGYSVTTATDGNVLKKVKQVKAGEMLTTRLEDGWIESEVKNIQPVKKSRKKVH.

This sequence belongs to the XseA family. In terms of assembly, heterooligomer composed of large and small subunits.

The protein resides in the cytoplasm. The enzyme catalyses Exonucleolytic cleavage in either 5'- to 3'- or 3'- to 5'-direction to yield nucleoside 5'-phosphates.. Its function is as follows. Bidirectionally degrades single-stranded DNA into large acid-insoluble oligonucleotides, which are then degraded further into small acid-soluble oligonucleotides. In Shigella boydii serotype 4 (strain Sb227), this protein is Exodeoxyribonuclease 7 large subunit.